Consider the following 557-residue polypeptide: Glutamine--tRNA ligase (557 aa).

Positions 42-52 match the 'HIGH' region motif; sequence PEPNGYLHIGH. ATP-binding positions include 43–45 and 49–55; these read EPN and HIGHAKS. Asp75 and Tyr220 together coordinate L-glutamine. ATP-binding positions include Thr239 and 270–271; that span reads RL. The 'KMSKS' region motif lies at 277–281; that stretch reads LTSKR.

The protein belongs to the class-I aminoacyl-tRNA synthetase family. In terms of assembly, monomer.

It is found in the cytoplasm. It carries out the reaction tRNA(Gln) + L-glutamine + ATP = L-glutaminyl-tRNA(Gln) + AMP + diphosphate. The protein is Glutamine--tRNA ligase of Haemophilus influenzae (strain ATCC 51907 / DSM 11121 / KW20 / Rd).